The primary structure comprises 481 residues: Abl interactor 1 (481 aa).

Residue Ala-2 is modified to N-acetylalanine. The segment at 18-79 (ALIESYQNLT…NNVLQLLDIQ (62 aa)) is required for binding to WASF1. The 63-residue stretch at 45 to 107 (KALEETKAYT…DIHKEKVARR (63 aa)) folds into the t-SNARE coiled-coil homology domain. Residue Tyr-53 is modified to Phosphotyrosine. Positions 158 to 285 (AKHGNNQPAR…PGAAPGSQYG (128 aa)) are disordered. Residues 161–175 (GNNQPARTGTLSRTN) are compositionally biased toward polar residues. Residues Thr-174 and Thr-178 each carry the phosphothreonine modification. A phosphoserine mark is found at Ser-183 and Ser-187. Tyr-213 carries the post-translational modification Phosphotyrosine. Residue Thr-215 is modified to Phosphothreonine. Phosphoserine is present on residues Ser-216, Ser-222, and Ser-225. A compositionally biased stretch (polar residues) spans 222–235 (SQHSPGRTASLNQR). Low complexity-rich tracts occupy residues 248–258 (SRENSGSSSIG) and 272–282 (GPAAPGAAPGS). Phosphoserine is present on residues Ser-292 and Ser-296. Disordered regions lie at residues 318–348 (AQPH…LTPQ) and 361–392 (NIAD…PPPV). 2 stretches are compositionally biased toward pro residues: residues 366-376 (PTPPPPPPPDD) and 383-392 (SPPPPPPPPV). The SH3 domain maps to 419 to 478 (NYIEKVVAIYDYTKDKDDELSFKEGAIIYVIKKNDDGWFEGVCNRVTGLFPGNYVESIMH). Residue Tyr-428 is modified to Phosphotyrosine. The residue at position 439 (Ser-439) is a Phosphoserine. Thr-480 is modified (phosphothreonine).

Belongs to the ABI family. As to quaternary structure, interacts with ENAH, Abelson murine leukemia virus V-ABL, ABL1, STX1A, SNAP25, VAMP2, and through its N-terminus with WASF1. Part of a complex consisting of ABI1, STX1A and SNAP25. Part of a complex consisting of ABI1, EPS8 and SOS1. Interacts with EPS8, SOS1, SOS2, GRB2, SPTA1, and the first SH3 domain of NCK1. Component of the WAVE2 complex composed of ABI1, CYFIP1/SRA1, NCKAP1/NAP1 (NCKAP1l/HEM1 in hematopoietic cells) and WASF2/WAVE2. Interacts (via SH3 domain) with SHANK2 and SHANK3, but not SHANK1; the interaction is direct. Interacts with the heterodimer MYC:MAX; the interaction may enhance MYC:MAX transcriptional activity. Interacts with FNBP1L (via the SH3 domain), WASF2, and CDC42, but only in the presence of FNBP1L. Post-translationally, phosphorylated on tyrosine residues after serum stimulation or induction by v-Abl. Seems to be phosphorylated at Tyr-53 by ABL1, required for nuclear but not for synaptic localization. In terms of tissue distribution, widely expressed with highest levels in bone marrow, spleen, brain, testes, and embryonic brain. In adult brain prominently expressed in the neocortex, hippocampus and dentate gyrus.

The protein resides in the cytoplasm. Its subcellular location is the nucleus. It localises to the cell projection. It is found in the lamellipodium. The protein localises to the filopodium. The protein resides in the growth cone. Its subcellular location is the postsynaptic density. It localises to the cytoskeleton. Its function is as follows. May act in negative regulation of cell growth and transformation by interacting with nonreceptor tyrosine kinases ABL1 and/or ABL2. In vitro, at least isoform 2 and isoform 4 suppress the transforming activity of Abelson murine leukemia virus (v-Abl) after overexpression in fibroblasts. May play a role in regulation EGF-induced Erk pathway activation. Involved in cytoskeletal reorganization and EGFR signaling. Together with EPS8 participates in transduction of signals from Ras to Rac. In vitro, a trimeric complex of ABI1, EPS8 and SOS1 exhibits Rac specific guanine nucleotide exchange factor (GEF) activity and ABI1 seems to act as an adapter in the complex. Regulates ABL1/c-Abl-mediated phosphorylation of ENAH. Recruits WASF1 to lamellipodia and there seems to regulate WASF1 protein level. In brain, seems to regulate the dendritic outgrowth and branching as well as to determine the shape and number of synaptic contacts of developing neurons. This Mus musculus (Mouse) protein is Abl interactor 1.